The sequence spans 462 residues: MLDFAIFAVTFLLALVGAVLYLYPASRQASGIPGLTPTEEKDGNLPDIVNSGSLHEFLVNLHGRYGPVVSFWFGRRLVVSLGTADALKQHFNPNKTLDPFETMLKSLLGYRSGAGSGSEDHVRRRLYGDAVTAALQSNFPLLLKLSEELLDKWLSYPETQHIPLSQHMLGFALKFVTRMVLGDTFEGEQEVIRFQKIHGTVWSEIGKGFLDGSLDKNTTRKNQYQEALMQLEAILKKIIKERKGGDFSQHTFIDSLVQRNLNEQQILEDSVVFSLAGCIVTARLCTWAIHFLTTAEEVQKKLHKEVDHVLGKGPITSEKIEQLRYCQQVLCETVRTAKLTPVSAQLQDIEGKVGPFIIPKETLVLYALGVVLQDASTWPSPHKFDPDRFADEPVMKVFSSLGFSGTWECPELRFAYVVTTVLVSVLLKKLHLLAVDRQVFEMKYELVTSCREETWITVSERH.

The chain crosses the membrane as a helical span at residues 4-24 (FAIFAVTFLLALVGAVLYLYP). Cysteine 409 serves as a coordination point for heme.

This sequence belongs to the cytochrome P450 family. Heme is required as a cofactor.

The protein resides in the membrane. This is Cytochrome P450 20A1 (Cyp20a1) from Rattus norvegicus (Rat).